The chain runs to 229 residues: Potassium/proton antiporter CemA (229 aa).

4 consecutive transmembrane segments (helical) span residues 7 to 27, 114 to 134, 154 to 174, and 189 to 209; these read LIPL…SLSF, IICF…LVIL, ILLL…ELMI, and IISG…KYWI.

Belongs to the CemA family.

The protein localises to the plastid. It localises to the chloroplast inner membrane. It catalyses the reaction K(+)(in) + H(+)(out) = K(+)(out) + H(+)(in). Functionally, contributes to K(+)/H(+) antiport activity by supporting proton efflux to control proton extrusion and homeostasis in chloroplasts in a light-dependent manner to modulate photosynthesis. Prevents excessive induction of non-photochemical quenching (NPQ) under continuous-light conditions. Indirectly promotes efficient inorganic carbon uptake into chloroplasts. In Fagus sylvatica (Beechnut), this protein is Potassium/proton antiporter CemA.